The chain runs to 35 residues: N-acylglucosamine 2-epimerase (35 aa).

The segment at 1–21 (LNLVDQLGEADEELAGTYAEL) is leucine-zipper.

This sequence belongs to the N-acylglucosamine 2-epimerase family. Homodimer. Forms a heterodimer with renin and inhibits its activity.

The catalysed reaction is an N-acyl-D-glucosamine = an N-acyl-D-mannosamine. It participates in amino-sugar metabolism; N-acetylneuraminate degradation. Catalyzes the interconversion of N-acetylglucosamine to N-acetylmannosamine. Involved in the N-glycolylneuraminic acid (Neu5Gc) degradation pathway. The sequence is that of N-acylglucosamine 2-epimerase from Canis lupus familiaris (Dog).